A 292-amino-acid chain; its full sequence is Geranyl diphosphate 2-C-methyltransferase (292 aa).

It belongs to the geranyl diphosphate 2-C-methyltransferase family. It depends on Mg(2+) as a cofactor.

The enzyme catalyses (2E)-geranyl diphosphate + S-adenosyl-L-methionine = (E)-2-methylgeranyl diphosphate + S-adenosyl-L-homocysteine + H(+). Functionally, catalyzes the SAM-dependent methylation of geranyl diphosphate (GPP) to yield (E)-2-methylgeranyl diphosphate (2-MeGPP). The protein is Geranyl diphosphate 2-C-methyltransferase of Streptomyces coelicolor (strain ATCC BAA-471 / A3(2) / M145).